Consider the following 568-residue polypeptide: Protein disconnected (568 aa).

The tract at residues 16–77 (GHGPHSHQHV…PRRWGSPPIN (62 aa)) is disordered. A compositionally biased stretch (basic residues) spans 19–29 (PHSHQHVHSHL). A compositionally biased stretch (low complexity) spans 30 to 45 (PSHPQPNAASPASSPG). Residues 46–62 (GSSGSGSGSAAGSGTGS) show a composition bias toward gly residues. C2H2-type zinc fingers lie at residues 92–115 (VQCS…SAVH) and 120–145 (HKCT…ANPN). Disordered regions lie at residues 134–157 (RRSR…RRKI), 220–364 (LLST…SDAF), 391–419 (SSAS…DSDS), and 501–568 (QQYN…PISV). Residues 235–246 (NEQDADPEDDND) show a composition bias toward acidic residues. Over residues 253–263 (QANSSSPAASS) the composition is skewed to polar residues. Over residues 282-292 (SLSLASSSSIA) the composition is skewed to low complexity. A compositionally biased stretch (basic and acidic residues) spans 313–360 (SEQDREQEQEQEQEREREAEKEQEQDVESDKEHEPEQEHELEREKRSP). The segment covering 391–402 (SSASSSSASASA) has biased composition (low complexity). The span at 520–550 (HLTLSHHHQEQHHHLGHHHMGHHHHHHHQHH) shows a compositional bias: basic residues. Positions 558 to 568 (SPAATNAPISV) are enriched in polar residues.

In terms of tissue distribution, expressed at low levels in the adult head and very low, but detectable, levels in the body.

It localises to the nucleus. In terms of biological role, required for the establishment of stable connections between the larval optic nerves, the Bolwig's nerves, and their target cells in the brain during embryonic development. This Drosophila melanogaster (Fruit fly) protein is Protein disconnected (disco).